Reading from the N-terminus, the 93-residue chain is Defensin-like protein 209 (93 aa).

Positions 1 to 19 (MKITILFLTLLVLSSSCTS) are cleaved as a signal peptide. Disulfide bonds link Cys-63–Cys-80, Cys-66–Cys-85, and Cys-70–Cys-87.

Belongs to the DEFL family.

The protein resides in the secreted. The protein is Defensin-like protein 209 of Arabidopsis thaliana (Mouse-ear cress).